Consider the following 345-residue polypeptide: 2-oxoglutarate-dependent ethylene/succinate-forming enzyme (345 aa).

The Fe2OG dioxygenase domain occupies 167–288; sequence GWHHMRVLRF…RFAMAYFHEP (122 aa). Positions 191 and 270 each coordinate Fe cation.

Belongs to the iron/ascorbate-dependent oxidoreductase family. As to quaternary structure, monomer. Fe(2+) serves as cofactor.

It catalyses the reaction 2-oxoglutarate + O2 + 2 H(+) = ethene + 3 CO2 + H2O. The enzyme catalyses L-arginine + 2-oxoglutarate + O2 = guanidine + L-glutamate 5-semialdehyde + succinate + CO2. It participates in alkene biosynthesis; ethylene biosynthesis via 2-oxoglutarate. Functionally, simultaneously catalyzes two reactions, namely formation of ethylene and of succinate from 2-oxoglutarate. In Ralstonia nicotianae (strain ATCC BAA-1114 / GMI1000) (Ralstonia solanacearum), this protein is 2-oxoglutarate-dependent ethylene/succinate-forming enzyme (efe).